Consider the following 246-residue polypeptide: MKSSSVAPRLKQERQDDCKFQEGDVNSLELRLGISSDNDQISGGGAASPWLGVGVHPWSLAARQGKAALEQAHQRPNECAVQRENRAASSAQLVGWPPVRAFRKNLSTPKPADADDLMNKVKLCSDEGHGSRCAAQERRSSSTMFVKVNLEGYAVGRKIDLKAHRSYDSLSQALQSMFHGFLSDGIATRDNELQQMEEGSKKRYVLVYEDNEGDRMLVGDVPWELFIASVKRLYIAQDPRVHAKLR.

The tract at residues 1–22 is disordered; the sequence is MKSSSVAPRLKQERQDDCKFQE. The span at 10–22 shows a compositional bias: basic and acidic residues; that stretch reads LKQERQDDCKFQE. The EAR-like (transcriptional repression) signature appears at 28-32; that stretch reads LELRL. The region spanning 143–238 is the PB1 domain; sequence TMFVKVNLEG…SVKRLYIAQD (96 aa).

It belongs to the Aux/IAA family. As to quaternary structure, homodimers and heterodimers. In terms of tissue distribution, highly expressed in flowers. Expressed in roots and seedlings.

The protein localises to the nucleus. Functionally, aux/IAA proteins are short-lived transcriptional factors that function as repressors of early auxin response genes at low auxin concentrations. This chain is Auxin-responsive protein IAA25 (IAA25), found in Oryza sativa subsp. japonica (Rice).